We begin with the raw amino-acid sequence, 309 residues long: Tagatose-6-phosphate kinase (309 aa).

It belongs to the carbohydrate kinase PfkB family. LacC subfamily.

The catalysed reaction is D-tagatofuranose 6-phosphate + ATP = D-tagatofuranose 1,6-bisphosphate + ADP + H(+). It functions in the pathway carbohydrate metabolism; D-tagatose 6-phosphate degradation; D-glyceraldehyde 3-phosphate and glycerone phosphate from D-tagatose 6-phosphate: step 1/2. The polypeptide is Tagatose-6-phosphate kinase (Streptococcus pyogenes serotype M6 (strain ATCC BAA-946 / MGAS10394)).